The following is a 701-amino-acid chain: DNA ligase (701 aa).

Residues 1-21 (MSAKSTPDAGPQEQATEAEAE) are disordered. Residues 50–54 (DADFD), 100–101 (SL), and E130 contribute to the NAD(+) site. Catalysis depends on K132, which acts as the N6-AMP-lysine intermediate. Positions 153, 193, 309, and 333 each coordinate NAD(+). The Zn(2+) site is built by C427, C430, C446, and C452. The BRCT domain occupies 616 to 701 (SIARTLEGLS…LENGPQAPEG (86 aa)).

It belongs to the NAD-dependent DNA ligase family. LigA subfamily. The cofactor is Mg(2+). It depends on Mn(2+) as a cofactor.

The catalysed reaction is NAD(+) + (deoxyribonucleotide)n-3'-hydroxyl + 5'-phospho-(deoxyribonucleotide)m = (deoxyribonucleotide)n+m + AMP + beta-nicotinamide D-nucleotide.. Its function is as follows. DNA ligase that catalyzes the formation of phosphodiester linkages between 5'-phosphoryl and 3'-hydroxyl groups in double-stranded DNA using NAD as a coenzyme and as the energy source for the reaction. It is essential for DNA replication and repair of damaged DNA. This Mycobacterium sp. (strain KMS) protein is DNA ligase.